A 39-amino-acid polypeptide reads, in one-letter code: Photosystem II reaction center protein L (39 aa).

A helical transmembrane segment spans residues 18 to 38 (SLYLGLLLVFVMGILFSSYFF).

The protein belongs to the PsbL family. PSII is composed of 1 copy each of membrane proteins PsbA, PsbB, PsbC, PsbD, PsbE, PsbF, PsbH, PsbI, PsbJ, PsbK, PsbL, PsbM, PsbT, PsbX, PsbY, Psb30/Ycf12, peripheral proteins PsbO, CyanoQ (PsbQ), PsbU, PsbV and a large number of cofactors. It forms dimeric complexes.

It is found in the cellular thylakoid membrane. One of the components of the core complex of photosystem II (PSII). PSII is a light-driven water:plastoquinone oxidoreductase that uses light energy to abstract electrons from H(2)O, generating O(2) and a proton gradient subsequently used for ATP formation. It consists of a core antenna complex that captures photons, and an electron transfer chain that converts photonic excitation into a charge separation. This subunit is found at the monomer-monomer interface and is required for correct PSII assembly and/or dimerization. In Prochlorococcus marinus (strain NATL2A), this protein is Photosystem II reaction center protein L.